The sequence spans 434 residues: [Arg8]-vasotocin receptor (434 aa).

Over 1–27 (MGRIANQTTASNDTDPFGRNEEVAKME) the chain is Extracellular. N-linked (GlcNAc...) asparagine glycans are attached at residues Asn6 and Asn12. A helical transmembrane segment spans residues 28–48 (ITVLSVTFFVAVIGNLSVLLA). The Cytoplasmic portion of the chain corresponds to 49 to 67 (MHNTKKKSSRMHLFIKHLS). Residues 68-88 (LADMVVAFFQVLPQLCWEITF) traverse the membrane as a helical segment. The Extracellular segment spans residues 89-98 (RFYGPDFLCR). Cys97 and Cys176 are joined by a disulfide. Residues 99 to 119 (IVKHLQVLGMFASTYMMVMMT) form a helical membrane-spanning segment. Topologically, residues 120-141 (LDRYIAICHPLKTLQQPTQRAY) are cytoplasmic. A helical membrane pass occupies residues 142 to 162 (IMIGSTWLCSLLLSTPQYFIF). Topologically, residues 163 to 191 (SLSEIQNGSYVYDCWGHFIEPWGIRAYIT) are extracellular. A helical membrane pass occupies residues 192–212 (WITVGIFLIPVIILMICYGFI). At 213 to 257 (CHSIWKNIKCKTMRGTRNTKDGMIGKVSVSSVTIISRAKLRTVKM) the chain is on the cytoplasmic side. Residues 258-278 (TLVIVLAYIVCWAPFFIVQMW) traverse the membrane as a helical segment. Residues 279–295 (SVWDENFSWDDSENAAV) are Extracellular-facing. Residues 296–316 (TLSALLASLNSCCNPWIYMLF) form a helical membrane-spanning segment. At 317-434 (SGHLLYDFLR…KSSQCMSKES (118 aa)) the chain is on the cytoplasmic side.

Belongs to the G-protein coupled receptor 1 family. Vasopressin/oxytocin receptor subfamily. In terms of tissue distribution, expressed in pituitary, liver, gills, swim bladder and lateral line.

Its subcellular location is the cell membrane. In terms of biological role, binds to vasotocin. Produces an induction of membrane chloride currents indicating that it is coupled to the inositol phosphate/calcium pathway. The polypeptide is [Arg8]-vasotocin receptor (Catostomus commersonii (White sucker)).